Here is a 1744-residue protein sequence, read N- to C-terminus: DNA-directed RNA polymerase I subunit RPA1 (1744 aa).

Zn(2+)-binding residues include C56, C69, and H72. Mg(2+) contacts are provided by D597, D599, and D601. The tract at residues 953-965 is bridging helix; sequence PAEYTIHAMAGRD. The tract at residues 1333–1484 is disordered; the sequence is VPREKESGDG…RDGTDWGGTS (152 aa). 2 stretches are compositionally biased toward gly residues: residues 1341–1354 and 1366–1376; these read DGSGNTGGMKGGSG and DDGGGPLGGTF. The span at 1464–1478 shows a compositional bias: basic and acidic residues; it reads RDAEDGGEMQDRDGT.

Belongs to the RNA polymerase beta' chain family. Component of the RNA polymerase I (Pol I) complex consisting of at least 13 subunits. In terms of processing, phosphorylated.

It localises to the nucleus. The protein localises to the nucleolus. It carries out the reaction RNA(n) + a ribonucleoside 5'-triphosphate = RNA(n+1) + diphosphate. In terms of biological role, DNA-dependent RNA polymerase catalyzes the transcription of DNA into RNA using the four ribonucleoside triphosphates as substrates. Largest and catalytic core component of RNA polymerase I which synthesizes ribosomal RNA precursors. Forms the polymerase active center together with the second largest subunit. A single stranded DNA template strand of the promoter is positioned within the central active site cleft of Pol I. A bridging helix emanates from RPA1 and crosses the cleft near the catalytic site and is thought to promote translocation of Pol I by acting as a ratchet that moves the RNA-DNA hybrid through the active site by switching from straight to bent conformations at each step of nucleotide addition. The protein is DNA-directed RNA polymerase I subunit RPA1 (TRP11) of Trypanosoma brucei brucei.